The sequence spans 290 residues: Shikimate kinase (290 aa).

81–91 contacts ATP; that stretch reads PIASGLKSSSA.

The protein belongs to the GHMP kinase family. Archaeal shikimate kinase subfamily.

Its subcellular location is the cytoplasm. It catalyses the reaction shikimate + ATP = 3-phosphoshikimate + ADP + H(+). It participates in metabolic intermediate biosynthesis; chorismate biosynthesis; chorismate from D-erythrose 4-phosphate and phosphoenolpyruvate: step 5/7. This is Shikimate kinase from Methanocella arvoryzae (strain DSM 22066 / NBRC 105507 / MRE50).